The sequence spans 173 residues: Regulatory protein RecX (173 aa).

The protein belongs to the RecX family.

It is found in the cytoplasm. Modulates RecA activity. The polypeptide is Regulatory protein RecX (Mycobacterium avium (strain 104)).